Reading from the N-terminus, the 598-residue chain is Aspartate--tRNA(Asp/Asn) ligase (598 aa).

Glutamate 177 contacts L-aspartate. Residues 201–204 (QLFK) are aspartate. Arginine 223 lines the L-aspartate pocket. ATP is bound by residues 223-225 (RDE) and glutamine 232. Histidine 456 is a binding site for L-aspartate. Glutamate 493 lines the ATP pocket. L-aspartate is bound at residue arginine 500. 545–548 (GLDR) provides a ligand contact to ATP.

It belongs to the class-II aminoacyl-tRNA synthetase family. Type 1 subfamily. As to quaternary structure, homodimer.

It localises to the cytoplasm. It carries out the reaction tRNA(Asx) + L-aspartate + ATP = L-aspartyl-tRNA(Asx) + AMP + diphosphate. In terms of biological role, aspartyl-tRNA synthetase with relaxed tRNA specificity since it is able to aspartylate not only its cognate tRNA(Asp) but also tRNA(Asn). Reaction proceeds in two steps: L-aspartate is first activated by ATP to form Asp-AMP and then transferred to the acceptor end of tRNA(Asp/Asn). The protein is Aspartate--tRNA(Asp/Asn) ligase of Prochlorococcus marinus (strain AS9601).